The sequence spans 120 residues: Large ribosomal subunit protein uL18 (120 aa).

Belongs to the universal ribosomal protein uL18 family. In terms of assembly, part of the 50S ribosomal subunit; part of the 5S rRNA/L5/L18/L25 subcomplex. Contacts the 5S and 23S rRNAs.

Its function is as follows. This is one of the proteins that bind and probably mediate the attachment of the 5S RNA into the large ribosomal subunit, where it forms part of the central protuberance. The sequence is that of Large ribosomal subunit protein uL18 from Bradyrhizobium sp. (strain ORS 278).